Consider the following 132-residue polypeptide: MTDDAVTGSQDDAEIEIRFNSDGLVPAIAQDADSGEVLMLAYVSPTALKRTRETGQAHYYSRSREELWKKGETSGHTQHIREIRADCDADTILYLVEQTGGACHTGHQSCFYRTLDGTEVTERVFDPETVYE.

Position 86 (Asp-86) interacts with Mg(2+). A Zn(2+)-binding site is contributed by Cys-87. Mg(2+)-binding residues include Asp-88 and Asp-90. Cys-103 and Cys-110 together coordinate Zn(2+).

This sequence belongs to the PRA-CH family. In terms of assembly, homodimer. Mg(2+) serves as cofactor. It depends on Zn(2+) as a cofactor.

It localises to the cytoplasm. It carries out the reaction 1-(5-phospho-beta-D-ribosyl)-5'-AMP + H2O = 1-(5-phospho-beta-D-ribosyl)-5-[(5-phospho-beta-D-ribosylamino)methylideneamino]imidazole-4-carboxamide. Its pathway is amino-acid biosynthesis; L-histidine biosynthesis; L-histidine from 5-phospho-alpha-D-ribose 1-diphosphate: step 3/9. In terms of biological role, catalyzes the hydrolysis of the adenine ring of phosphoribosyl-AMP. In Haloquadratum walsbyi (strain DSM 16790 / HBSQ001), this protein is Phosphoribosyl-AMP cyclohydrolase.